The primary structure comprises 342 residues: Phosphoribosylformylglycinamidine cyclo-ligase (342 aa).

It belongs to the AIR synthase family.

The protein localises to the cytoplasm. It catalyses the reaction 2-formamido-N(1)-(5-O-phospho-beta-D-ribosyl)acetamidine + ATP = 5-amino-1-(5-phospho-beta-D-ribosyl)imidazole + ADP + phosphate + H(+). Its pathway is purine metabolism; IMP biosynthesis via de novo pathway; 5-amino-1-(5-phospho-D-ribosyl)imidazole from N(2)-formyl-N(1)-(5-phospho-D-ribosyl)glycinamide: step 2/2. The protein is Phosphoribosylformylglycinamidine cyclo-ligase of Gloeothece citriformis (strain PCC 7424) (Cyanothece sp. (strain PCC 7424)).